The chain runs to 287 residues: Hydroxyethylthiazole kinase (287 aa).

A substrate-binding site is contributed by M50. ATP contacts are provided by R126 and S185. Residue G212 coordinates substrate.

The protein belongs to the Thz kinase family. Mg(2+) serves as cofactor.

The enzyme catalyses 5-(2-hydroxyethyl)-4-methylthiazole + ATP = 4-methyl-5-(2-phosphooxyethyl)-thiazole + ADP + H(+). It participates in cofactor biosynthesis; thiamine diphosphate biosynthesis; 4-methyl-5-(2-phosphoethyl)-thiazole from 5-(2-hydroxyethyl)-4-methylthiazole: step 1/1. Catalyzes the phosphorylation of the hydroxyl group of 4-methyl-5-beta-hydroxyethylthiazole (THZ). The polypeptide is Hydroxyethylthiazole kinase (Methanobrevibacter smithii (strain ATCC 35061 / DSM 861 / OCM 144 / PS)).